The primary structure comprises 280 residues: Mesaconyl-C(4)-CoA hydratase (280 aa).

Belongs to the HTD2 family. As to quaternary structure, homodimer.

The enzyme catalyses (3S)-citramalyl-CoA = 3-methylfumaryl-CoA + H2O. With respect to regulation, inhibited by 3-methylfumaryl-CoA concentrations above 0.3 mM. In terms of biological role, involved in the glyoxylate assimilation cycle used to regenerate acetyl-CoA and produce pyruvate as universal precursor for biosynthesis. Catalyzes the hydration of 3-methylfumaryl-CoA (mesaconyl-C4-CoA) to (3S)-citramalyl-CoA. This chain is Mesaconyl-C(4)-CoA hydratase (meh), found in Chloroflexus aurantiacus (strain ATCC 29366 / DSM 635 / J-10-fl).